Reading from the N-terminus, the 133-residue chain is DUF35 domain-containing scaffold protein (133 aa).

Cys23, Cys26, Cys37, and Cys40 together coordinate Zn(2+).

Belongs to the scaffold protein DUF35 family. In terms of assembly, interacts with acetoacetyl-CoA thiolase and HMG-CoA synthase (HMGCS) that catalyzes the first and second step in the mevalonate pathway, respectively.

Functions as a scaffold to connect the acetoacetyl-CoA thiolase and HMG-CoA synthase (HMGCS) dimers in the channeling thiolase/HMGCS complex, which allows for efficient coupling of the endergonic thiolase reaction with the exergonic HMGCS reaction. This chain is DUF35 domain-containing scaffold protein, found in Methanothermobacter thermautotrophicus (strain ATCC 29096 / DSM 1053 / JCM 10044 / NBRC 100330 / Delta H) (Methanobacterium thermoautotrophicum).